We begin with the raw amino-acid sequence, 155 residues long: Small ribosomal subunit protein uS7c (155 aa).

Belongs to the universal ribosomal protein uS7 family. Part of the 30S ribosomal subunit.

The protein resides in the plastid. The protein localises to the chloroplast. In terms of biological role, one of the primary rRNA binding proteins, it binds directly to 16S rRNA where it nucleates assembly of the head domain of the 30S subunit. The protein is Small ribosomal subunit protein uS7c (rps7) of Hydrastis canadensis (Goldenseal).